Reading from the N-terminus, the 301-residue chain is Asialoglycoprotein receptor 2 (301 aa).

The disordered stretch occupies residues 1–43; sequence MEKDCQDIQQLDSEENDHQLSGDDEHGSHVQDPRIENPHWKGQ. Residues 1-58 lie on the Cytoplasmic side of the membrane; sequence MEKDCQDIQQLDSEENDHQLSGDDEHGSHVQDPRIENPHWKGQPLSRPFPQRLCSTFR. A Phosphoserine modification is found at Ser-13. Residues 16-39 show a composition bias toward basic and acidic residues; it reads NDHQLSGDDEHGSHVQDPRIENPH. Cys-54 carries the S-palmitoyl cysteine lipid modification. The helical; Signal-anchor for type II membrane protein transmembrane segment at 59 to 79 threads the bilayer; the sequence is LSLLALAFNILLLVVICVVSS. Residues 80–301 lie on the Extracellular side of the membrane; that stretch reads QSIQLQEEFR…VCEKRRNITH (222 aa). Residues Asn-97 and Asn-165 are each glycosylated (N-linked (GlcNAc...) asparagine). The C-type lectin domain occupies 169 to 295; sequence CCPVNWVEFG…QQVNRWVCEK (127 aa). 3 disulfide bridges follow: Cys-170–Cys-181, Cys-198–Cys-293, and Cys-271–Cys-285. A glycan (N-linked (GlcNAc...) asparagine) is linked at Asn-298.

In terms of assembly, interacts with LASS2. As to expression, expressed exclusively in hepatic parenchymal cells.

The protein localises to the membrane. In terms of biological role, mediates the endocytosis of plasma glycoproteins to which the terminal sialic acid residue on their complex carbohydrate moieties has been removed. The receptor recognizes terminal galactose and N-acetylgalactosamine units. After ligand binding to the receptor, the resulting complex is internalized and transported to a sorting organelle, where receptor and ligand are disassociated. The receptor then returns to the cell membrane surface. The chain is Asialoglycoprotein receptor 2 (Asgr2) from Mus musculus (Mouse).